The chain runs to 235 residues: Purine nucleoside phosphorylase DeoD-type (235 aa).

An a purine D-ribonucleoside-binding site is contributed by His-4. Residues Gly-20, Arg-24, Arg-43, and 87–90 contribute to the phosphate site; that span reads RVGT. A purine D-ribonucleoside contacts are provided by residues 179–181 and 203–204; these read EME and SD. The Proton donor role is filled by Asp-204.

It belongs to the PNP/UDP phosphorylase family. In terms of assembly, homohexamer; trimer of homodimers.

The catalysed reaction is a purine D-ribonucleoside + phosphate = a purine nucleobase + alpha-D-ribose 1-phosphate. It carries out the reaction a purine 2'-deoxy-D-ribonucleoside + phosphate = a purine nucleobase + 2-deoxy-alpha-D-ribose 1-phosphate. Functionally, catalyzes the reversible phosphorolytic breakdown of the N-glycosidic bond in the beta-(deoxy)ribonucleoside molecules, with the formation of the corresponding free purine bases and pentose-1-phosphate. The sequence is that of Purine nucleoside phosphorylase DeoD-type from Clostridium perfringens (strain SM101 / Type A).